Here is a 705-residue protein sequence, read N- to C-terminus: Elongation factor G (705 aa).

Residues 7-287 form the tr-type G domain; it reads HLTRNIGIMA…YVCAFLPSPL (281 aa). GTP-binding positions include 16–23, 84–88, and 138–141; these read AHIDAGKT, DTPGH, and NKMD.

Belongs to the TRAFAC class translation factor GTPase superfamily. Classic translation factor GTPase family. EF-G/EF-2 subfamily.

The protein localises to the cytoplasm. Functionally, catalyzes the GTP-dependent ribosomal translocation step during translation elongation. During this step, the ribosome changes from the pre-translocational (PRE) to the post-translocational (POST) state as the newly formed A-site-bound peptidyl-tRNA and P-site-bound deacylated tRNA move to the P and E sites, respectively. Catalyzes the coordinated movement of the two tRNA molecules, the mRNA and conformational changes in the ribosome. This is Elongation factor G from Bacteroides thetaiotaomicron (strain ATCC 29148 / DSM 2079 / JCM 5827 / CCUG 10774 / NCTC 10582 / VPI-5482 / E50).